Consider the following 173-residue polypeptide: Large ribosomal subunit protein uL10 (173 aa).

This sequence belongs to the universal ribosomal protein uL10 family. In terms of assembly, part of the ribosomal stalk of the 50S ribosomal subunit. The N-terminus interacts with L11 and the large rRNA to form the base of the stalk. The C-terminus forms an elongated spine to which L12 dimers bind in a sequential fashion forming a multimeric L10(L12)X complex.

In terms of biological role, forms part of the ribosomal stalk, playing a central role in the interaction of the ribosome with GTP-bound translation factors. This Maridesulfovibrio salexigens (strain ATCC 14822 / DSM 2638 / NCIMB 8403 / VKM B-1763) (Desulfovibrio salexigens) protein is Large ribosomal subunit protein uL10.